Here is a 262-residue protein sequence, read N- to C-terminus: ATP synthase subunit a (262 aa).

Transmembrane regions (helical) follow at residues 30–50, 64–84, 91–111, 123–143, 149–169, 195–215, and 220–240; these read ITSLTNIAILFIIGLLVLTIF, WNIVLETWVASILGIVKDQIG, LIYFPLIFTFFSFVFISNILG, ISVTLGLSIAIMIGVTLIGFS, FFSLFVPKGTPLALVPLLVLI, LFGVISALSVSACIAVSSLLL, and ITLPLAVLVVLYGLELLVALL.

This sequence belongs to the ATPase A chain family. In terms of assembly, F-type ATPases have 2 components, CF(1) - the catalytic core - and CF(0) - the membrane proton channel. CF(1) has five subunits: alpha(3), beta(3), gamma(1), delta(1), epsilon(1). CF(0) has three main subunits: a, b and c.

It is found in the mitochondrion inner membrane. In terms of biological role, mitochondrial membrane ATP synthase (F(1)F(0) ATP synthase or Complex V) produces ATP from ADP in the presence of a proton gradient across the membrane which is generated by electron transport complexes of the respiratory chain. F-type ATPases consist of two structural domains, F(1) - containing the extramembraneous catalytic core and F(0) - containing the membrane proton channel, linked together by a central stalk and a peripheral stalk. During catalysis, ATP synthesis in the catalytic domain of F(1) is coupled via a rotary mechanism of the central stalk subunits to proton translocation. Key component of the proton channel; it may play a direct role in the translocation of protons across the membrane. The chain is ATP synthase subunit a (ATP6) from Allomyces macrogynus.